Here is a 702-residue protein sequence, read N- to C-terminus: Ribosomal RNA large subunit methyltransferase K/L (702 aa).

The region spanning 43–154 (LVYQSLMWSR…KETASIALDL (112 aa)) is the THUMP domain.

It belongs to the methyltransferase superfamily. RlmKL family.

Its subcellular location is the cytoplasm. It catalyses the reaction guanosine(2445) in 23S rRNA + S-adenosyl-L-methionine = N(2)-methylguanosine(2445) in 23S rRNA + S-adenosyl-L-homocysteine + H(+). The catalysed reaction is guanosine(2069) in 23S rRNA + S-adenosyl-L-methionine = N(2)-methylguanosine(2069) in 23S rRNA + S-adenosyl-L-homocysteine + H(+). Specifically methylates the guanine in position 2445 (m2G2445) and the guanine in position 2069 (m7G2069) of 23S rRNA. The protein is Ribosomal RNA large subunit methyltransferase K/L of Shigella dysenteriae serotype 1 (strain Sd197).